Reading from the N-terminus, the 216-residue chain is CsgBAC operon transcriptional regulatory protein (216 aa).

One can recognise an HTH luxR-type domain in the interval 149–214 (NSTESALLTH…QAVSWANDNL (66 aa)). Residues 173 to 192 (NNEIARSLFISENTVKTHLY) constitute a DNA-binding region (H-T-H motif).

It localises to the cell inner membrane. Its function is as follows. The master regulator for adhesive curli fimbriae expression; necessary for transcription of the csgBAC/ymdA operon. Plays a positive role in biofilm formation. May have the capability to respond to starvation and/or high cell density by activating csgBA transcription. Low-level constitutive expression confers an adherent curli fimbriae-expressing phenotype, up-regulates 10 genes and down-regulates 14 others. The polypeptide is CsgBAC operon transcriptional regulatory protein (csgD) (Escherichia coli (strain K12)).